We begin with the raw amino-acid sequence, 248 residues long: DCN1-like protein 4 (248 aa).

The tract at residues 1–35 is disordered; the sequence is MPRGKRRAADTISDNMDHGQPKRARTSYTSIPTQQ. Polar residues predominate over residues 26 to 35; the sequence is TSYTSIPTQQ. One can recognise a DCUN1 domain in the interval 47-235; that stretch reads FSQKRCMAWF…MLDEFVEWLR (189 aa).

It localises to the nucleus. Its function is as follows. Inhibits neddylation of cullin components of SCF-type E3 ubiquitin ligase complexes and thus regulates SCF-type complex activity. Essential for development. Function inhibits cell proliferation and cell growth. The chain is DCN1-like protein 4 from Drosophila melanogaster (Fruit fly).